Reading from the N-terminus, the 83-residue chain is Cytochrome b559 subunit alpha (83 aa).

A helical membrane pass occupies residues 21-35 (VIHSITIPSLFIAGW). Residue histidine 23 coordinates heme.

The protein belongs to the PsbE/PsbF family. As to quaternary structure, heterodimer of an alpha subunit and a beta subunit. PSII is composed of 1 copy each of membrane proteins PsbA, PsbB, PsbC, PsbD, PsbE, PsbF, PsbH, PsbI, PsbJ, PsbK, PsbL, PsbM, PsbT, PsbX, PsbY, PsbZ, Psb30/Ycf12, at least 3 peripheral proteins of the oxygen-evolving complex and a large number of cofactors. It forms dimeric complexes. Heme b is required as a cofactor.

It localises to the plastid. Its subcellular location is the chloroplast thylakoid membrane. Its function is as follows. This b-type cytochrome is tightly associated with the reaction center of photosystem II (PSII). PSII is a light-driven water:plastoquinone oxidoreductase that uses light energy to abstract electrons from H(2)O, generating O(2) and a proton gradient subsequently used for ATP formation. It consists of a core antenna complex that captures photons, and an electron transfer chain that converts photonic excitation into a charge separation. The chain is Cytochrome b559 subunit alpha from Huperzia lucidula (Shining clubmoss).